The sequence spans 85 residues: Beta-insect depressant toxin Lqh-dprIT3a (85 aa).

Positions 1–21 (MKLLLLLTISASMLIEGLVNA) are cleaved as a signal peptide. The LCN-type CS-alpha/beta domain occupies 22-82 (DGYIRGGDGC…EWDYETNTCG (61 aa)). Intrachain disulfides connect Cys31-Cys81, Cys35-Cys56, Cys42-Cys63, and Cys46-Cys65. The residue at position 82 (Gly82) is a Glycine amide.

The protein belongs to the long (4 C-C) scorpion toxin superfamily. Sodium channel inhibitor family. Beta subfamily. As to expression, expressed by the venom gland.

Its subcellular location is the secreted. Functionally, depressant insect beta-toxins cause a transient contraction paralysis followed by a slow flaccid paralysis. They bind voltage-independently at site-4 of sodium channels (Nav) and block action potentials, primarily by depolarizing the axonal membrane and suppressing the sodium current. This depressant toxin is active only on insects. It is found in a relatively small amount in the venom, and its activity on insects is 10-fold higher compared to other known depressant toxins. This chain is Beta-insect depressant toxin Lqh-dprIT3a, found in Leiurus hebraeus (Hebrew deathstalker scorpion).